A 454-amino-acid polypeptide reads, in one-letter code: Probable spastin homolog Bm1_53365 (454 aa).

ATP is bound at residue 218–225 (GPPGNGKT).

Belongs to the AAA ATPase family. Spastin subfamily. Homohexamer. The homohexamer is stabilized by ATP-binding. The homohexamer may adopt a ring conformation through which microtubules pass prior to being severed. Interacts with microtubules.

The protein localises to the cytoplasm. It localises to the cytoskeleton. Its subcellular location is the perinuclear region. The catalysed reaction is n ATP + n H2O + a microtubule = n ADP + n phosphate + (n+1) alpha/beta tubulin heterodimers.. Its function is as follows. Severs microtubules, probably in an ATP-dependent fashion. The chain is Probable spastin homolog Bm1_53365 from Brugia malayi (Filarial nematode worm).